Reading from the N-terminus, the 232-residue chain is Putative uridine kinase DAS2 (232 aa).

17 to 24 (GGHATGVG) lines the ATP pocket.

The protein belongs to the uridine kinase family.

It localises to the cytoplasm. The protein localises to the nucleus. It carries out the reaction uridine + ATP = UMP + ADP + H(+). It catalyses the reaction cytidine + ATP = CMP + ADP + H(+). It functions in the pathway pyrimidine metabolism; CTP biosynthesis via salvage pathway; CTP from cytidine: step 1/3. The protein operates within pyrimidine metabolism; UMP biosynthesis via salvage pathway; UMP from uridine: step 1/1. Putative uridine kinase identified in a screen for mutants with increased levels of rDNA transcription. The polypeptide is Putative uridine kinase DAS2 (DAS2) (Saccharomyces cerevisiae (strain ATCC 204508 / S288c) (Baker's yeast)).